The sequence spans 302 residues: Homoserine O-acetyltransferase (302 aa).

The Acyl-thioester intermediate role is filled by cysteine 142. Substrate-binding residues include lysine 163 and serine 192. The Proton acceptor role is filled by histidine 235. Glutamate 237 is a catalytic residue. Arginine 249 is a substrate binding site.

This sequence belongs to the MetA family.

The protein localises to the cytoplasm. It carries out the reaction L-homoserine + acetyl-CoA = O-acetyl-L-homoserine + CoA. It participates in amino-acid biosynthesis; L-methionine biosynthesis via de novo pathway; O-acetyl-L-homoserine from L-homoserine: step 1/1. In terms of biological role, transfers an acetyl group from acetyl-CoA to L-homoserine, forming acetyl-L-homoserine. The sequence is that of Homoserine O-acetyltransferase from Geobacillus kaustophilus (strain HTA426).